A 339-amino-acid polypeptide reads, in one-letter code: 4-amino-5-hydroxymethyl-2-methylpyrimidine phosphate synthase (339 aa).

Lysine 62 carries the post-translational modification N6-(pyridoxal phosphate)lysine. The active site involves histidine 66. Glycine 115–glycine 118 contributes to the pyridoxal 5'-phosphate binding site. A CCCFC; essential for catalytic activity, may be the site of iron coordination motif is present at residues cysteine 195–cysteine 199.

It belongs to the NMT1/THI5 family. In terms of assembly, homodimer. It depends on Fe(3+) as a cofactor.

It catalyses the reaction N(6)-(pyridoxal phosphate)-L-lysyl-[4-amino-5-hydroxymethyl-2-methylpyrimidine phosphate synthase] + L-histidyl-[4-amino-5-hydroxymethyl-2-methylpyrimidine phosphate synthase] + 2 Fe(3+) + 4 H2O = L-lysyl-[4-amino-5-hydroxymethyl-2-methylpyrimidine phosphate synthase] + (2S)-2-amino-5-hydroxy-4-oxopentanoyl-[4-amino-5-hydroxymethyl-2-methylpyrimidine phosphate synthase] + 4-amino-2-methyl-5-(phosphooxymethyl)pyrimidine + 3-oxopropanoate + 2 Fe(2+) + 2 H(+). The protein operates within cofactor biosynthesis; thiamine diphosphate biosynthesis. Functionally, responsible for the formation of the pyrimidine heterocycle in the thiamine biosynthesis pathway. Catalyzes the formation of hydroxymethylpyrimidine phosphate (HMP-P) from histidine and pyridoxal phosphate (PLP). The protein uses PLP and the active site histidine to form HMP-P, generating an inactive enzyme. The enzyme can only undergo a single turnover, which suggests it is a suicide enzyme. This Candida albicans (strain WO-1) (Yeast) protein is 4-amino-5-hydroxymethyl-2-methylpyrimidine phosphate synthase.